Consider the following 147-residue polypeptide: Urease accessory protein UreE (147 aa).

The protein belongs to the UreE family.

Its subcellular location is the cytoplasm. Involved in urease metallocenter assembly. Binds nickel. Probably functions as a nickel donor during metallocenter assembly. In Nostoc sp. (strain PCC 7120 / SAG 25.82 / UTEX 2576), this protein is Urease accessory protein UreE.